A 334-amino-acid polypeptide reads, in one-letter code: Biotin synthase (334 aa).

In terms of domain architecture, Radical SAM core spans 55–280 (EEIEVEGIIS…HTMLRFAGGR (226 aa)). 3 residues coordinate [4Fe-4S] cluster: Cys70, Cys74, and Cys77. Residues Cys113, Cys205, and Arg275 each contribute to the [2Fe-2S] cluster site.

The protein belongs to the radical SAM superfamily. Biotin synthase family. Homodimer. It depends on [4Fe-4S] cluster as a cofactor. [2Fe-2S] cluster serves as cofactor.

It carries out the reaction (4R,5S)-dethiobiotin + (sulfur carrier)-SH + 2 reduced [2Fe-2S]-[ferredoxin] + 2 S-adenosyl-L-methionine = (sulfur carrier)-H + biotin + 2 5'-deoxyadenosine + 2 L-methionine + 2 oxidized [2Fe-2S]-[ferredoxin]. Its pathway is cofactor biosynthesis; biotin biosynthesis; biotin from 7,8-diaminononanoate: step 2/2. Catalyzes the conversion of dethiobiotin (DTB) to biotin by the insertion of a sulfur atom into dethiobiotin via a radical-based mechanism. This chain is Biotin synthase, found in Corynebacterium glutamicum (strain R).